Reading from the N-terminus, the 471-residue chain is Trigger factor (471 aa).

Residues 165–244 form the PPIase FKBP-type domain; the sequence is GDFVSIDLRA…VQSVKERVLP (80 aa). The disordered stretch occupies residues 407-471; sequence VTDASGNPVD…EATAEDPAKS (65 aa). A compositionally biased stretch (acidic residues) spans 416-443; that stretch reads DLEELVGGTEEDDVTEDATEDVTEDAAP.

The protein belongs to the FKBP-type PPIase family. Tig subfamily.

It is found in the cytoplasm. The enzyme catalyses [protein]-peptidylproline (omega=180) = [protein]-peptidylproline (omega=0). In terms of biological role, involved in protein export. Acts as a chaperone by maintaining the newly synthesized protein in an open conformation. Functions as a peptidyl-prolyl cis-trans isomerase. This Kineococcus radiotolerans (strain ATCC BAA-149 / DSM 14245 / SRS30216) protein is Trigger factor.